The primary structure comprises 82 residues: MEPPVKINCPTCGRRFLSDETPAMPFCSKRCQLIDLGRWMNEEIGLPHEGDPGDAPVEYLDDRDLTQPSPERQNESFHRYSE.

Zn(2+) is bound by residues C9, C12, C27, and C31. The disordered stretch occupies residues 44–82; sequence IGLPHEGDPGDAPVEYLDDRDLTQPSPERQNESFHRYSE. A compositionally biased stretch (basic and acidic residues) spans 72 to 82; sequence RQNESFHRYSE.

It belongs to the DNA gyrase inhibitor YacG family. As to quaternary structure, interacts with GyrB. Requires Zn(2+) as cofactor.

Its function is as follows. Inhibits all the catalytic activities of DNA gyrase by preventing its interaction with DNA. Acts by binding directly to the C-terminal domain of GyrB, which probably disrupts DNA binding by the gyrase. This chain is DNA gyrase inhibitor YacG, found in Rhodopirellula baltica (strain DSM 10527 / NCIMB 13988 / SH1).